Here is a 172-residue protein sequence, read N- to C-terminus: Shikimate kinase (172 aa).

Position 14 to 19 (14 to 19) interacts with ATP; the sequence is GAGKST. S18 contacts Mg(2+). Substrate contacts are provided by D36, R60, and G82. R120 is an ATP binding site. R140 is a substrate binding site. ATP is bound at residue Q157.

This sequence belongs to the shikimate kinase family. As to quaternary structure, monomer. Requires Mg(2+) as cofactor.

It is found in the cytoplasm. The enzyme catalyses shikimate + ATP = 3-phosphoshikimate + ADP + H(+). Its pathway is metabolic intermediate biosynthesis; chorismate biosynthesis; chorismate from D-erythrose 4-phosphate and phosphoenolpyruvate: step 5/7. Functionally, catalyzes the specific phosphorylation of the 3-hydroxyl group of shikimic acid using ATP as a cosubstrate. This is Shikimate kinase from Aeromonas salmonicida (strain A449).